A 142-amino-acid chain; its full sequence is Deoxyuridine 5'-triphosphate nucleotidohydrolase (142 aa).

Residues 62 to 64 (RSG), Asn-75, 79 to 81 (TID), and Lys-89 each bind substrate.

This sequence belongs to the dUTPase family. Mg(2+) serves as cofactor.

The catalysed reaction is dUTP + H2O = dUMP + diphosphate + H(+). It functions in the pathway pyrimidine metabolism; dUMP biosynthesis; dUMP from dCTP (dUTP route): step 2/2. In terms of biological role, this enzyme is involved in nucleotide metabolism: it produces dUMP, the immediate precursor of thymidine nucleotides and it decreases the intracellular concentration of dUTP so that uracil cannot be incorporated into DNA. The protein is Deoxyuridine 5'-triphosphate nucleotidohydrolase of Nautilia profundicola (strain ATCC BAA-1463 / DSM 18972 / AmH).